The following is a 66-amino-acid chain: Protein translocase subunit SecE (66 aa).

Residues 34-54 (LVVIVAVFVFSLICLVLDYGI) traverse the membrane as a helical segment.

This sequence belongs to the SecE/SEC61-gamma family. As to quaternary structure, component of the Sec protein translocase complex. Heterotrimer consisting of SecY, SecE and SecG subunits. The heterotrimers can form oligomers, although 1 heterotrimer is thought to be able to translocate proteins. Interacts with the ribosome. Interacts with SecDF, and other proteins may be involved. Interacts with SecA.

It is found in the cell inner membrane. Its function is as follows. Essential subunit of the Sec protein translocation channel SecYEG. Clamps together the 2 halves of SecY. May contact the channel plug during translocation. This Rickettsia bellii (strain RML369-C) protein is Protein translocase subunit SecE.